Here is a 178-residue protein sequence, read N- to C-terminus: Large ribosomal subunit protein uL6 (178 aa).

Belongs to the universal ribosomal protein uL6 family. In terms of assembly, part of the 50S ribosomal subunit.

Its function is as follows. This protein binds to the 23S rRNA, and is important in its secondary structure. It is located near the subunit interface in the base of the L7/L12 stalk, and near the tRNA binding site of the peptidyltransferase center. The protein is Large ribosomal subunit protein uL6 of Corynebacterium kroppenstedtii (strain DSM 44385 / JCM 11950 / CIP 105744 / CCUG 35717).